Consider the following 224-residue polypeptide: Protein-L-isoaspartate O-methyltransferase (224 aa).

Ser-63 is an active-site residue.

This sequence belongs to the methyltransferase superfamily. L-isoaspartyl/D-aspartyl protein methyltransferase family.

It is found in the cytoplasm. The enzyme catalyses [protein]-L-isoaspartate + S-adenosyl-L-methionine = [protein]-L-isoaspartate alpha-methyl ester + S-adenosyl-L-homocysteine. Its function is as follows. Catalyzes the methyl esterification of L-isoaspartyl residues in peptides and proteins that result from spontaneous decomposition of normal L-aspartyl and L-asparaginyl residues. It plays a role in the repair and/or degradation of damaged proteins. In Herpetosiphon aurantiacus (strain ATCC 23779 / DSM 785 / 114-95), this protein is Protein-L-isoaspartate O-methyltransferase.